The following is an 831-amino-acid chain: MLQSLKNVFFSETTTTTTTSTTTPVSNSAIKRYIGNINDYKNANYFNYYRILENKYDYLRDTFGLKTFSNNETFKLIDFTIDSEMNNTCITSIWNQKYSNNSSIPVEGIYKIPLAPYSVISGFTVEYQDKVFIGKIKSKEKAQNQYSDSIASGGQAFLAEKTQDGQFSFRIGNLPPNENVTIHLTIISGVCPHLSSLQNCFHRFLFPNYSFNFQFNLNIKLTLPIKTIELLYYPNREIKFKENSNNKEATLTFSSKNGIDSDIVCIVEPENDIERPQSIIEHSKLNNTYAVSVNFTPSFSHLTSDDVNQKSEFIFLIDCSGSMSGEPIKKAKRALEIIIRSLNENCKFNIYCFGSRFTKAFDNSKMYNDETLAQISGYVEKIDADLGGTELLPPIRDILSTESDFEYPRQLFILTDGEVSERDSLINYVATESNNTRIFTYGIGNSVDTELVIGLSKACKGYYEMIKDNSNFEEQVMKLVSIAFEPTLSNIKVDWGTELQIEQGPTKIRPLYSGETLIVYALLKDNKIPQSTVQVSLIGDGPTGSKLEFPITLDFSKTIDYENNSVHTLAAFNIIKDLEEVERKGNHSNNRDRIEELGKSYGLISKYTSYIVTAASEQVTEETMKTLNIIQTPTTTTTTSHSNRRREEADHTMNQTLLKNCAVVDDLFESCEMLSETSIKFECNRVYKKIPSSLSKIFSFFSSLSTSSSVRSEVVSNFDNDIESEEKKNNSINNNSDSLLKLIKLQKANGSWSSPFSEFKIDLSKKPSNIDSDDIWITLIVINKILNDYPTQQSQYDLVIQKASKWVKQQLTRLNIPNQYGSLLATSKLHI.

In terms of domain architecture, VIT spans Arg60–Ser188. Residues Glu312–Val480 enclose the VWFA domain.

The polypeptide is von Willebrand factor A domain-containing protein DDB_G0285981 (Dictyostelium discoideum (Social amoeba)).